We begin with the raw amino-acid sequence, 209 residues long: Peptide deformylase 2 (209 aa).

Fe cation-binding residues include Cys-101 and His-149. Glu-150 is an active-site residue. His-153 provides a ligand contact to Fe cation.

It belongs to the polypeptide deformylase family. It depends on Fe(2+) as a cofactor.

It carries out the reaction N-terminal N-formyl-L-methionyl-[peptide] + H2O = N-terminal L-methionyl-[peptide] + formate. In terms of biological role, removes the formyl group from the N-terminal Met of newly synthesized proteins. Requires at least a dipeptide for an efficient rate of reaction. N-terminal L-methionine is a prerequisite for activity but the enzyme has broad specificity at other positions. This is Peptide deformylase 2 from Coxiella burnetii (strain RSA 493 / Nine Mile phase I).